The chain runs to 424 residues: MKNFLRKSIAAQSYSKMFSQGTSFKSLNLSLEAPSGARSSFRSLEHLDKVSRHYISEIIQKVHPLSSDERHLLSIIINSNFNFRHQSNSNLSNIILNIKSFDKIQSENIQTHKNTYSEDIKEISNHDFVFFGVEISNHQEKLPLNKTHHTVDFGANAYIIDHDSPYGYMTLTDHFDNAIPPVFYHEHQSFFLDNFKEVVDEVSRYVHGNQGKTDVPIFNTKDMRLGIGLHLIDFIRKSKDQGFREFCYNKNIDPVSLDRIINFVFQLEYHIPRMLSTDNFKKIKLRDISLEDAIKASNYEEINNKVTDKKMAHQALAYSLGNKKADIALYLLSKFNFTKQDVAEMEKMKNNRYCNLYDVEYLLSKDGANYKVLEYFINNGLVDVNKKFQKANSGDTMLDNAMKSKDSKMIDFFIKKWSGIRQTI.

NAD(+) contacts are provided by histidine 85, glutamine 86, serine 87, leucine 91, isoleucine 104, asparagine 114, phenylalanine 130, histidine 148, phenylalanine 153, aspartate 173, and glutamate 268. Residue glutamate 268 is part of the active site. 3 ANK repeats span residues 311–340 (MAHQ…FTKQ), 355–386 (NLYD…DVNK), and 393–422 (SGDT…GIRQ).

The protein belongs to the OspC family.

It is found in the secreted. The protein localises to the host cytoplasm. The enzyme catalyses L-arginyl-[protein] + NAD(+) = ADP-riboxanated L-argininyl-[protein] + nicotinamide + NH4(+) + H(+). ADP-riboxanase effector that mediates arginine ADP-riboxanation of host caspase CASP4/CASP11, thereby inhibiting pyroptosis. This is Arginine ADP-riboxanase OspC4 from Shigella flexneri.